Reading from the N-terminus, the 334-residue chain is Ornithine carbamoyltransferase, catabolic (334 aa).

Carbamoyl phosphate is bound by residues 57 to 60 (STRT), Gln84, Arg108, and 135 to 138 (HPTQ). L-ornithine contacts are provided by residues Asn168, Asp232, and 236-237 (SM). Residues 274–275 (CL) and Arg320 contribute to the carbamoyl phosphate site.

It belongs to the aspartate/ornithine carbamoyltransferase superfamily. OTCase family.

Its subcellular location is the cytoplasm. It catalyses the reaction carbamoyl phosphate + L-ornithine = L-citrulline + phosphate + H(+). Its pathway is amino-acid degradation; L-arginine degradation via ADI pathway; carbamoyl phosphate from L-arginine: step 2/2. In terms of biological role, reversibly catalyzes the transfer of the carbamoyl group from carbamoyl phosphate (CP) to the N(epsilon) atom of ornithine (ORN) to produce L-citrulline. This is Ornithine carbamoyltransferase, catabolic (arcB) from Rhizobium meliloti (strain 1021) (Ensifer meliloti).